We begin with the raw amino-acid sequence, 242 residues long: MALGPAAMGYDRAITIFSPDGSLYQVDYAFEAVKRGWTTLGVKTKSGVVLLAEKRKATQLLDVDGIEKIFMLDDHVGCTFAGLASDGRILIDYARSQALQHRLIYDEPISIEYLTKVISDVKQAYTQHGGVRPFGVALIVGGIDKGKQPKLLMTEPSGQFMPYYAVAIGQGGYTATEYLEKNYKEDLDIQSTILLALRALMATLKPGEKLNYSSVEIGYADVDSGTFKKLTTEERSDLLQKI.

This sequence belongs to the peptidase T1A family. The 20S proteasome core is composed of 14 alpha and 14 beta subunits that assemble into four stacked heptameric rings, resulting in a barrel-shaped structure. The two inner rings, each composed of seven catalytic beta subunits, are sandwiched by two outer rings, each composed of seven alpha subunits. The catalytic chamber with the active sites is on the inside of the barrel. Has a gated structure, the ends of the cylinder being occluded by the N-termini of the alpha-subunits. Is capped at one or both ends by the proteasome regulatory ATPase, PAN.

The protein localises to the cytoplasm. Its activity is regulated as follows. The formation of the proteasomal ATPase PAN-20S proteasome complex, via the docking of the C-termini of PAN into the intersubunit pockets in the alpha-rings, triggers opening of the gate for substrate entry. Interconversion between the open-gate and close-gate conformations leads to a dynamic regulation of the 20S proteasome proteolysis activity. Its function is as follows. Component of the proteasome core, a large protease complex with broad specificity involved in protein degradation. The chain is Proteasome subunit alpha from Sulfolobus acidocaldarius (strain ATCC 33909 / DSM 639 / JCM 8929 / NBRC 15157 / NCIMB 11770).